A 118-amino-acid chain; its full sequence is Non-specific lipid-transfer protein D (118 aa).

The signal sequence occupies residues 1–25 (MAGLMKLACLIFACMIVAGPITSNA). 4 cysteine pairs are disulfide-bonded: cysteine 29/cysteine 77, cysteine 39/cysteine 54, cysteine 55/cysteine 100, and cysteine 75/cysteine 114.

This sequence belongs to the plant LTP family.

Functionally, plant non-specific lipid-transfer proteins transfer phospholipids as well as galactolipids across membranes. May play a role in wax or cutin deposition in the cell walls of expanding epidermal cells and certain secretory tissues. In Brassica oleracea var. italica (Broccoli), this protein is Non-specific lipid-transfer protein D (WAX9D).